The primary structure comprises 114 residues: Putative pterin-4-alpha-carbinolamine dehydratase (114 aa).

The protein belongs to the pterin-4-alpha-carbinolamine dehydratase family.

The enzyme catalyses (4aS,6R)-4a-hydroxy-L-erythro-5,6,7,8-tetrahydrobiopterin = (6R)-L-erythro-6,7-dihydrobiopterin + H2O. The chain is Putative pterin-4-alpha-carbinolamine dehydratase from Methylococcus capsulatus (strain ATCC 33009 / NCIMB 11132 / Bath).